We begin with the raw amino-acid sequence, 174 residues long: Shikimate kinase 2 (174 aa).

ATP is bound at residue 12–17; it reads GCGKTT. Mg(2+) is bound by residues Thr16 and Asp32. Substrate contacts are provided by Asp34, Arg58, and Gly79. Residues 112 to 126 form an LID domain region; it reads QAAPEEDLRPTLTGK. Arg120 is an ATP binding site. Arg139 contacts substrate.

Belongs to the shikimate kinase family. AroL subfamily. As to quaternary structure, monomer. Mg(2+) is required as a cofactor.

The protein resides in the cytoplasm. The enzyme catalyses shikimate + ATP = 3-phosphoshikimate + ADP + H(+). The protein operates within metabolic intermediate biosynthesis; chorismate biosynthesis; chorismate from D-erythrose 4-phosphate and phosphoenolpyruvate: step 5/7. In terms of biological role, catalyzes the specific phosphorylation of the 3-hydroxyl group of shikimic acid using ATP as a cosubstrate. The chain is Shikimate kinase 2 from Shigella boydii serotype 4 (strain Sb227).